Consider the following 330-residue polypeptide: Stomatin-1 (330 aa).

Positions M1–Q19 are enriched in polar residues. The tract at residues M1 to Q27 is disordered. Residues M42–M62 form a helical membrane-spanning segment.

The protein belongs to the band 7/mec-2 family.

It localises to the membrane. In Caenorhabditis elegans, this protein is Stomatin-1 (sto-1).